Reading from the N-terminus, the 365-residue chain is Beta-parvin (365 aa).

A compositionally biased stretch (pro residues) spans 1–12 (MSSAPPRSPTPR). The interval 1 to 52 (MSSAPPRSPTPRAPKMKKDESFLGKLGGTLARKKKTREVTDLQEEGKSAINS) is disordered. A Phosphoserine modification is found at serine 8. A compositionally biased stretch (basic and acidic residues) spans 37–47 (REVTDLQEEGK). 2 Calponin-homology (CH) domains span residues 88 to 195 (KELV…MHFR) and 255 to 362 (NLVK…TKYK).

It belongs to the parvin family. As to quaternary structure, interacts with ILK, ARHGEF6, PXN (via LD motifs), ACTN2 and actin. Interacts with DYSF. In terms of processing, phosphorylated by ILK. In terms of tissue distribution, expressed predominantly in heart and moderately in spleen, lung and skeletal muscle.

The protein localises to the cell junction. Its subcellular location is the focal adhesion. The protein resides in the cell membrane. It localises to the cytoplasm. It is found in the cytoskeleton. The protein localises to the cell projection. Its subcellular location is the lamellipodium. The protein resides in the myofibril. It localises to the sarcomere. It is found in the z line. In terms of biological role, adapter protein that plays a role in integrin signaling via ILK and in activation of the GTPases CDC42 and RAC1 by guanine exchange factors, such as ARHGEF6. Is involved in the reorganization of the actin cytoskeleton and formation of lamellipodia. Plays a role in cell adhesion, cell spreading, establishment or maintenance of cell polarity, and cell migration. The sequence is that of Beta-parvin (Parvb) from Mus musculus (Mouse).